A 2359-amino-acid polypeptide reads, in one-letter code: Nonribosomal peptide synthetase anaPS (2359 aa).

The tract at residues 239–633 (RNATVHGDTL…VRRKDNQVKI (395 aa)) is adenylation 1. The 77-residue stretch at 770 to 846 (AAQGKGEEAI…ELASAANLSN (77 aa)) folds into the Carrier 1 domain. O-(pantetheine 4'-phosphoryl)serine is present on Ser-807. The segment at 883–1292 (EDIYPSTALQ…VGDLPRMSRQ (410 aa)) is condensation 1. The adenylation 2 stretch occupies residues 1321–1709 (LEYPNACAVS…GRKDSQIKIR (389 aa)). Residues 1842–1918 (APSNSVEQDL…AIANKIGVVS (77 aa)) enclose the Carrier 2 domain. An O-(pantetheine 4'-phosphoryl)serine modification is found at Ser-1879. The segment at 1936 to 2356 (LTPIQEFFFE…LVKCLEDLAS (421 aa)) is condensation 2.

Belongs to the NRP synthetase family.

It catalyses the reaction anthranilate + L-tryptophan + 2 ATP = (R)-benzodiazepinedione + 2 AMP + 2 diphosphate + H(+). It participates in alkaloid biosynthesis. Functionally, nonribosomal peptide synthetase; part of the gene cluster that mediates the biosynthesis of the prenylated pyrroloindoline diketopiperazine acetylaszonalenin. The first step in the pathway is the formation of (R)-benzodiazepinedione by condensation of tryptophan and anthranilic acid catalyzed by the non-ribosomal peptide synthetase anaPS. The prenyltransferase anaPT then converts (R)-benzodiazepinedione to aszonalenin in the presence of dimethylallyl diphosphate (DMAPP) via C3-prenylation. The last step in the biosynthesis of acetylaszonalenin via acetylation of aszonalenin at position N1 catalyzed by anaAT. This Neosartorya fischeri (strain ATCC 1020 / DSM 3700 / CBS 544.65 / FGSC A1164 / JCM 1740 / NRRL 181 / WB 181) (Aspergillus fischerianus) protein is Nonribosomal peptide synthetase anaPS.